The following is a 764-amino-acid chain: FAST kinase domain-containing protein 5, mitochondrial (764 aa).

Serine 95 carries the post-translational modification Phosphoserine. At lysine 507 the chain carries N6-acetyllysine. The RAP domain occupies 697–757 (LAIQFTNRNQ…RLEKLAFLHE (61 aa)).

It belongs to the FAST kinase family. In terms of assembly, found in a complex with GRSF1, DDX28, DHX30 and FASTKD2. Associates with the 12S mitochondrial rRNA (12S mt-rRNA).

It is found in the mitochondrion matrix. Its subcellular location is the mitochondrion nucleoid. In terms of biological role, plays an important role in the processing of non-canonical mitochondrial mRNA precursors. This is FAST kinase domain-containing protein 5, mitochondrial (FASTKD5) from Macaca fascicularis (Crab-eating macaque).